We begin with the raw amino-acid sequence, 664 residues long: Acid beta-fructofuranosidase 4, vacuolar (664 aa).

Residues 1–43 lie on the Cytoplasmic side of the membrane; it reads MASSDALLPISAREEEPLCPYTRLPMADPNQETHGPRRRRPFK. Positions 1–108 are cleaved as a propeptide — removed in mature form; it reads MASSDALLPI…WKLSGDRNTP (108 aa). Short sequence motifs (critical for endoplasmic reticulum export) lie at residues 7 to 8 and 9 to 10; these read LL and PI. The Critical for trafficking from the trans-Golgi network to the prevacuolar compartment and from the prevacuolar compartment to the central vacuole motif lies at 14–16; sequence EEE. The chain crosses the membrane as a helical; Signal-anchor for type II membrane protein span at residues 44–64; it reads GLLAVSFGLLFIAFYVALIAT. At 65-664 the chain is on the lumenal side; sequence HDGSRSNDEG…DEAVRALSRT (600 aa). The N-linked (GlcNAc...) asparagine glycan is linked to N113. Residues 132–135, Q151, W159, 194–195, and 258–259 each bind substrate; these read WMND, WT, and RD. The active site involves D135. A glycan (N-linked (GlcNAc...) (complex) asparagine) is linked at N280. Substrate is bound by residues E313 and D346. 2 N-linked (GlcNAc...) asparagine glycosylation sites follow: N362 and N498. Cysteines 510 and 558 form a disulfide.

The protein belongs to the glycosyl hydrolase 32 family. May be present in two forms, a 70 kDa monomer and a heterodimer of the 30 kDa and 38 kDa subunits. The ratio of the levels of the two forms within cells appears to be regulated developmentally. As to expression, mostly expressed in stems, roots and flowers, and, to a lower extent, in mature leaves.

The protein localises to the vacuole. The protein resides in the endoplasmic reticulum membrane. It is found in the golgi apparatus membrane. It localises to the golgi apparatus. Its subcellular location is the trans-Golgi network membrane. The protein localises to the prevacuolar compartment membrane. The protein resides in the vacuole membrane. It is found in the vacuole lumen. It carries out the reaction Hydrolysis of terminal non-reducing beta-D-fructofuranoside residues in beta-D-fructofuranosides.. The protein operates within glycan biosynthesis; sucrose metabolism. With respect to regulation, inhibited by C/VIF1 and C/VIF2. Its function is as follows. Possible role in the continued mobilization of sucrose to sink organs. Regulates root elongation. In Arabidopsis thaliana (Mouse-ear cress), this protein is Acid beta-fructofuranosidase 4, vacuolar.